Reading from the N-terminus, the 396-residue chain is RNA polymerase principal sigma factor HrdA (396 aa).

Positions 1–20 are enriched in basic residues; that stretch reads MRGGQRRASRLRPPTYRRRP. Residues 1–96 are disordered; it reads MRGGQRRASR…PTRTESGGPS (96 aa). Composition is skewed to low complexity over residues 33–42 and 56–75; these read QTQTLTQTDT and LLAMPAQPGAGAALPHPGAP. The Polymerase core binding signature appears at 187–200; the sequence is DLVQEGNLGLIRAV. A DNA-binding region (H-T-H motif) is located at residues 357–376; that stretch reads LEEIGRLFGVTRERIRQIES.

Belongs to the sigma-70 factor family. In terms of assembly, interacts transiently with the RNA polymerase catalytic core. Interacts with RNA polymerase-binding protein RbpA.

Sigma factors are initiation factors that promote the attachment of RNA polymerase to specific initiation sites and are then released. The protein is RNA polymerase principal sigma factor HrdA (hrdA) of Streptomyces coelicolor (strain ATCC BAA-471 / A3(2) / M145).